Consider the following 192-residue polypeptide: 3-isopropylmalate dehydratase small subunit (192 aa).

This sequence belongs to the LeuD family. LeuD type 1 subfamily. In terms of assembly, heterodimer of LeuC and LeuD.

The enzyme catalyses (2R,3S)-3-isopropylmalate = (2S)-2-isopropylmalate. It participates in amino-acid biosynthesis; L-leucine biosynthesis; L-leucine from 3-methyl-2-oxobutanoate: step 2/4. Its function is as follows. Catalyzes the isomerization between 2-isopropylmalate and 3-isopropylmalate, via the formation of 2-isopropylmaleate. The sequence is that of 3-isopropylmalate dehydratase small subunit from Zymomonas mobilis subsp. mobilis (strain ATCC 31821 / ZM4 / CP4).